Consider the following 233-residue polypeptide: Small ribosomal subunit protein uS2 (233 aa).

The protein belongs to the universal ribosomal protein uS2 family.

The sequence is that of Small ribosomal subunit protein uS2 from Clostridium acetobutylicum (strain ATCC 824 / DSM 792 / JCM 1419 / IAM 19013 / LMG 5710 / NBRC 13948 / NRRL B-527 / VKM B-1787 / 2291 / W).